We begin with the raw amino-acid sequence, 280 residues long: Tryptophan 2,3-dioxygenase (280 aa).

Substrate-binding positions include 47-51 (FVVQH), Tyr109, and Arg113. His236 contacts heme. Thr250 serves as a coordination point for substrate.

This sequence belongs to the tryptophan 2,3-dioxygenase family. In terms of assembly, homotetramer. Requires heme as cofactor.

The catalysed reaction is L-tryptophan + O2 = N-formyl-L-kynurenine. Its pathway is amino-acid degradation; L-tryptophan degradation via kynurenine pathway; L-kynurenine from L-tryptophan: step 1/2. Heme-dependent dioxygenase that catalyzes the oxidative cleavage of the L-tryptophan (L-Trp) pyrrole ring and converts L-tryptophan to N-formyl-L-kynurenine. Catalyzes the oxidative cleavage of the indole moiety. The sequence is that of Tryptophan 2,3-dioxygenase from Serratia proteamaculans (strain 568).